The following is a 59-amino-acid chain: Large ribosomal subunit protein bL32 (59 aa).

Residues 1–59 form a disordered region; the sequence is MAVQQNKKSPSKRGMHRSHDHLSAAPLAVEPTTGETHLRHHVSPNGYYRGRKVIKTKND. Composition is skewed to basic residues over residues 9 to 19 and 49 to 59; these read SPSKRGMHRSH and RGRKVIKTKND.

Belongs to the bacterial ribosomal protein bL32 family.

The protein is Large ribosomal subunit protein bL32 of Cupriavidus necator (strain ATCC 17699 / DSM 428 / KCTC 22496 / NCIMB 10442 / H16 / Stanier 337) (Ralstonia eutropha).